An 898-amino-acid polypeptide reads, in one-letter code: Endoplasmic reticulum metallopeptidase 1 (898 aa).

Position 1 is an N-acetylmethionine (methionine 1). Residues 1 to 55 (MEWSSESAAVRRHRGTAERREGEAAASHRQREASAQEDAKGVGRMWGKTENGGGS) are disordered. Topologically, residues 1–66 (MEWSSESAAV…VAKTALSEAR (66 aa)) are cytoplasmic. Residues 29 to 41 (RQREASAQEDAKG) are compositionally biased toward basic and acidic residues. The chain crosses the membrane as a helical span at residues 67-87 (TALALALYLLALRALVQLSLQ). Residues 88–393 (RLVLSRTSGL…SSSEYRHGSM (306 aa)) lie on the Lumenal side of the membrane. Asparagine 176 carries an N-linked (GlcNAc...) asparagine glycan. The cysteines at positions 198 and 216 are disulfide-linked. Zn(2+) is bound by residues histidine 199 and aspartate 211. The active-site Proton acceptor is the glutamate 245. Zn(2+) contacts are provided by glutamate 246, glutamate 272, and histidine 348. A helical transmembrane segment spans residues 394–414 (VFFDVLGLLVIAYPSRVGSII). Residues 415-451 (NYMVVMAVVLYLGKKLLRPKHRNANYMRDFLCGLGIT) are Cytoplasmic-facing. A helical membrane pass occupies residues 452-472 (FISWFTSLVTVLIIAVFISLI). Residues 473-480 (GQSLSWYN) are Lumenal-facing. Residues 481–501 (YFYIAVCLYGTATVAKIIFIH) form a helical membrane-spanning segment. At 502-515 (TLAKRFYYMNASDL) the chain is on the cytoplasmic side. A helical transmembrane segment spans residues 516–538 (YLGELFFDTSLFVHCAFLVALTY). Residues 539–542 (QGFC) lie on the Lumenal side of the membrane. Residues 543 to 562 (SAFMSAVWVVFPLLTKLCVY) traverse the membrane as a helical segment. Residues 563-573 (KDFKKHGAQGR) lie on the Cytoplasmic side of the membrane. A helical membrane pass occupies residues 574–594 (FVALYLLGMFIPYLYGLYLIW). The Lumenal portion of the chain corresponds to 595 to 615 (AVFEMFTPILGRSGSEIPPDV). The helical transmembrane segment at 616–636 (VLASILAVCVMILSSYFITFI) threads the bilayer. The Cytoplasmic portion of the chain corresponds to 637–645 (YLVNSTKKT). A helical transmembrane segment spans residues 646-666 (ILTLILVCAVTFLLVCSGAFF). The Lumenal segment spans residues 667–898 (PYSSNPESPK…WVSTYSLFVF (232 aa)). Asparagine 724 is a glycosylation site (N-linked (GlcNAc...) asparagine).

The protein belongs to the peptidase M28 family. Zn(2+) serves as cofactor.

It is found in the endoplasmic reticulum membrane. In terms of biological role, within the ovary, required for the organization of somatic cells and oocytes into discrete follicular structures. In Mus musculus (Mouse), this protein is Endoplasmic reticulum metallopeptidase 1.